A 361-amino-acid polypeptide reads, in one-letter code: 3-dehydroquinate synthase (361 aa).

NAD(+) is bound by residues 72 to 77 (SGEKEK), 130 to 131 (TT), Lys-142, and Lys-151. Residues Glu-184, His-247, and His-264 each contribute to the Zn(2+) site.

It belongs to the sugar phosphate cyclases superfamily. Dehydroquinate synthase family. It depends on Co(2+) as a cofactor. Zn(2+) is required as a cofactor. The cofactor is NAD(+).

It is found in the cytoplasm. It carries out the reaction 7-phospho-2-dehydro-3-deoxy-D-arabino-heptonate = 3-dehydroquinate + phosphate. It participates in metabolic intermediate biosynthesis; chorismate biosynthesis; chorismate from D-erythrose 4-phosphate and phosphoenolpyruvate: step 2/7. Functionally, catalyzes the conversion of 3-deoxy-D-arabino-heptulosonate 7-phosphate (DAHP) to dehydroquinate (DHQ). The protein is 3-dehydroquinate synthase of Bacillus cereus (strain G9842).